Consider the following 521-residue polypeptide: C-22 sterol desaturase erg5 (521 aa).

A helical transmembrane segment spans residues 30 to 50 (AVLNGFTFWKALATLFFAAVI).

This sequence belongs to the cytochrome P450 family. Heme serves as cofactor.

The protein resides in the endoplasmic reticulum membrane. It carries out the reaction 5-dehydroepisterol + NADPH + O2 + H(+) = ergosta-5,7,22,24(28)-tetraen-3beta-ol + NADP(+) + 2 H2O. The protein operates within steroid metabolism; ergosterol biosynthesis. In terms of biological role, C-22 sterol desaturase; part of the third module of ergosterol biosynthesis pathway that includes the late steps of the pathway. Erg5 converts 5-dehydroepisterol into ergosta-5,7,22,24(28)-tetraen-3beta-ol by forming the C-22(23) double bond in the sterol side chain. The third module or late pathway involves the ergosterol synthesis itself through consecutive reactions that mainly occur in the endoplasmic reticulum (ER) membrane. Firstly, the squalene synthase erg9 catalyzes the condensation of 2 farnesyl pyrophosphate moieties to form squalene, which is the precursor of all steroids. Squalene synthase is crucial for balancing the incorporation of farnesyl diphosphate (FPP) into sterol and nonsterol isoprene synthesis. Secondly, squalene is converted into lanosterol by the consecutive action of the squalene epoxidase erg1 and the lanosterol synthase erg7. Then, the delta(24)-sterol C-methyltransferase erg6 methylates lanosterol at C-24 to produce eburicol. Eburicol is the substrate of the sterol 14-alpha demethylase encoded by cyp51A and cyp51B, to yield 4,4,24-trimethyl ergosta-8,14,24(28)-trienol. The C-14 reductase erg24 then reduces the C14=C15 double bond which leads to 4,4-dimethylfecosterol. A sequence of further demethylations at C-4, involving the C-4 demethylation complex containing the C-4 methylsterol oxidases erg25A or erg25B, the sterol-4-alpha-carboxylate 3-dehydrogenase erg26 and the 3-keto-steroid reductase erg27, leads to the production of fecosterol via 4-methylfecosterol. The C-8 sterol isomerase erg2 then catalyzes the reaction which results in unsaturation at C-7 in the B ring of sterols and thus converts fecosterol to episterol. The sterol-C5-desaturase erg3B then catalyzes the introduction of a C-5 double bond in the B ring to produce 5-dehydroepisterol. The 2 other sterol-C5-desaturases, erg3A and erg3C, seem to be less important in ergosterol biosynthesis. The C-22 sterol desaturase erg5 further converts 5-dehydroepisterol into ergosta-5,7,22,24(28)-tetraen-3beta-ol by forming the C-22(23) double bond in the sterol side chain. Finally, ergosta-5,7,22,24(28)-tetraen-3beta-ol is substrate of the C-24(28) sterol reductases erg4A and erg4B to produce ergosterol. Possible alternative sterol biosynthetic pathways might exist from fecosterol to ergosterol, depending on the activities of the erg3 isoforms. This is C-22 sterol desaturase erg5 from Aspergillus fumigatus (strain ATCC MYA-4609 / CBS 101355 / FGSC A1100 / Af293) (Neosartorya fumigata).